Consider the following 5084-residue polypeptide: Apicidin F synthase (5084 aa).

The tract at residues 209-606 is adenylation 1; sequence ARILQRQPDK…VGRLDSQVKL (398 aa). The Carrier 1 domain occupies 731–808; it reads HETDNCQRLL…EAASSMREVV (78 aa). Ser768 bears the O-(pantetheine 4'-phosphoryl)serine mark. Condensation regions lie at residues 822–1124 and 1309–1609; these read YPLS…FPIY and EIYC…SILV. Positions 1788–2192 are adenylation 2; sequence EDPTREAVFS…IGRKDNQIKI (405 aa). The region spanning 2341–2415 is the Carrier 2 domain; it reads VVKDDPVSEL…DMAKGMAPLS (75 aa). Ser2376 is subject to O-(pantetheine 4'-phosphoryl)serine. The disordered stretch occupies residues 2415 to 2441; sequence SLTAPESTSSSSPQSFSTSTSTTIIEN. Residues 2421–2437 show a composition bias toward low complexity; it reads STSSSSPQSFSTSTSTT. Residues 2478 to 2755 form a condensation 3 region; it reads EDIFPCTPMQ…IVTLPRQLNI (278 aa). The adenylation 3 stretch occupies residues 2935–3328; it reads RNNPRARAVV…GRRDGQIKLR (394 aa). The Carrier 3 domain occupies 3463–3539; the sequence is ETWSSSEAIV…DMASRLSRPE (77 aa). At Ser3500 the chain carries O-(pantetheine 4'-phosphoryl)serine. The interval 3581 to 3866 is condensation 4; that stretch reads EDIYPCTPLQ…IATVPSRTTI (286 aa). Residues 4029–4426 form an adenylation 4 region; sequence RKQVELSPSH…TVSWIGRKDH (398 aa). The Carrier 4 domain maps to 4554–4631; the sequence is ALKTPKERLL…DMADLLGPLR (78 aa). Ser4592 is modified (O-(pantetheine 4'-phosphoryl)serine). The tract at residues 4669-4948 is condensation 5; that stretch reads EQIYPCTAYQ…ISKLPLRIQL (280 aa).

This sequence belongs to the NRP synthetase family.

Its pathway is secondary metabolite biosynthesis. In terms of biological role, non-ribosomal peptide synthetase; part of the gene cluster that mediates the biosynthesis of the cyclic tetrapeptide apicidin F (APF). The non-ribosomal peptide synthetase apf1 incorporates four different amino acids to produce apicidin F: L-phenylalanine, D-pipecolic acid (D-pip), N-methoxy-L-tryptophan and L-2-aminooctanedioic acid. L-Phenylalanine is the only proteinogenic amino acid directly used by apf1. The 3 other apf1 substrates are non-proteinogenic and have to be modified by other enzymes of the cluster. Lysine is converted to delta-1-pyrroline-5-carboxylate (P5C) which is reduced to L-pipecolic acid (L-pip) by apf3. L-pip is epimerized to D-pip, probably by apf1 activity, prior to incorporation. L-Tryptophan is N-oxidyzed by one of the cytochrome P450 monooxygenases (apf7 or apf8), and further methylated at the hydroxy group by the O-methyltransferase apf6 to yield N-methoxy-L-tryptophan. The synthesis of the fourth apf1 substrate is more complex. The fatty acid synthase apf5 is involved in the synthesis of the octanoic acid backbone of L-2-aminooctanedioic acid by fixing one acetyl-CoA unit and three malonyl-CoA units. Then one of the cytochrome P450 monooxygenases (apf7 or apf8) may oxidize this backbone to 2-oxooctanoic acid. The aminotransferase apf4 is predicted to catalyze the exchange of the keto group with an amino group. The next step would be the oxidation of 2-aminooctanoic acid by one of the cytochrome P450 monooxygenases (apf7 or apf8). The last step is the oxidation of 2-amino-8-hydroxyoctanoic acid to 2-aminooctanedioic acid is catalyzed by the FAD-dependent monooxygenase apf9. The polypeptide is Apicidin F synthase (Gibberella fujikuroi (strain CBS 195.34 / IMI 58289 / NRRL A-6831) (Bakanae and foot rot disease fungus)).